Here is a 100-residue protein sequence, read N- to C-terminus: Urease subunit gamma (100 aa).

It belongs to the urease gamma subunit family. Heterotrimer of UreA (gamma), UreB (beta) and UreC (alpha) subunits. Three heterotrimers associate to form the active enzyme.

Its subcellular location is the cytoplasm. The catalysed reaction is urea + 2 H2O + H(+) = hydrogencarbonate + 2 NH4(+). It functions in the pathway nitrogen metabolism; urea degradation; CO(2) and NH(3) from urea (urease route): step 1/1. The protein is Urease subunit gamma of Prochlorococcus marinus (strain MIT 9215).